Consider the following 111-residue polypeptide: MSDTLNRLAEVLEERKHAAPDSSYVASLYHKGLNKILEKLGEESVETIIAAKDAEHSKDYSDVIYETADLWFHSLVMLSALGQHPQAVLDELERRFGLSGHDEKAARQPSA.

This sequence belongs to the PRA-PH family.

The protein resides in the cytoplasm. The catalysed reaction is 1-(5-phospho-beta-D-ribosyl)-ATP + H2O = 1-(5-phospho-beta-D-ribosyl)-5'-AMP + diphosphate + H(+). Its pathway is amino-acid biosynthesis; L-histidine biosynthesis; L-histidine from 5-phospho-alpha-D-ribose 1-diphosphate: step 2/9. The sequence is that of Phosphoribosyl-ATP pyrophosphatase from Pseudomonas putida (strain GB-1).